Reading from the N-terminus, the 1014-residue chain is MICAL-like protein 2 (1014 aa).

The region spanning 1–107 is the Calponin-homology (CH) domain; that stretch reads MAAIKALQEW…YVSQYYNYFH (107 aa). Positions 1 to 261 are forms an intramolecular interaction with the C-terminal coiled coil domain keeping the protein in a closed conformation; it reads MAAIKALQEW…KLSNLASRQP (261 aa). Phosphoserine is present on residues Ser110, Ser144, and Ser154. A disordered region spans residues 114 to 181; sequence GMAGMKRPSS…PSPKAAPGTV (68 aa). One can recognise an LIM zinc-binding domain in the interval 187–249; the sequence is SICGVCGKHV…THHSSEAVSV (63 aa). Ser250 carries the phosphoserine modification. The tract at residues 262–394 is necessary and sufficient for interaction with actinins; the sequence is GGGIADTRPI…QGQAASKGVK (133 aa). The tract at residues 262 to 810 is mediates targeting to the cell plasma membrane; sequence GGGIADTRPI…QDDQTRSCKE (549 aa). Disordered regions lie at residues 311–450 and 609–780; these read LTPP…SRVP and TLPK…RRKK. Positions 332 to 355 are enriched in polar residues; sequence STVTTTSANSKATTHVTNSSPVGW. Positions 356 to 368 are enriched in low complexity; the sequence is SSSAQSSTGTSGS. Polar residues predominate over residues 384 to 398; the sequence is PQGQAASKGVKTQLN. 2 stretches are compositionally biased toward low complexity: residues 399 to 419 and 438 to 447; these read SSTD…SSRT and PASSSSSHAS. Composition is skewed to polar residues over residues 624-633 and 646-656; these read LSHSTTQAFS and VGSTSWTSVSL. Basic and acidic residues-rich tracts occupy residues 701 to 711 and 720 to 737; these read EGWRARLKPVD and LEQK…DTPR. A compositionally biased stretch (polar residues) spans 747-758; that stretch reads IHITLTPIQQKR. Residue Thr759 is modified to Phosphothreonine. Phosphoserine occurs at positions 773 and 837. A forms an intramolecular interaction with the N-terminal Calponin-homology and LIM zinc-binding domains-containing region keeping the protein in a closed conformation region spans residues 811 to 918; it reads KTATWGTRES…LMYKSKDQCL (108 aa). The bMERB domain maps to 838 to 985; it reads PVRLHPNYIS…EQEEDQMLES (148 aa). Residues 845 to 885 are a coiled coil; it reads YISQEELQRQLQDIERQLDALELRGVELEKRLRAAEGDASE. Residues 918–1014 form a mediates interaction with RAB13 and is required for transition from the closed to the open conformation region; it reads LEERQLDLQG…WSSKSKSGQT (97 aa).

As to quaternary structure, interacts with RAB13 (GTP-bound form); competes with RAB8A and is involved in tight junctions assembly. Interacts with RAB8A; competes with RAB13 and is involved in E-cadherin endocytic recycling. Interacts with RAB8B. Interacts (preferentially in opened conformation) with ACTN1 and ACTN4; stimulated by RAB13 activation. Interacts (via calponin-homology (CH) domain) with the filamins FLNA, FLNB and FLNC (via actin-binding domain).

It is found in the cell membrane. The protein resides in the cell junction. It localises to the tight junction. The protein localises to the recycling endosome. Its subcellular location is the cell projection. It is found in the neuron projection. The protein resides in the cytoplasm. It localises to the cytoskeleton. In terms of biological role, effector of small Rab GTPases which is involved in junctional complexes assembly through the regulation of cell adhesion molecules transport to the plasma membrane and actin cytoskeleton reorganization. Regulates the endocytic recycling of occludins, claudins and E-cadherin to the plasma membrane and may thereby regulate the establishment of tight junctions and adherens junctions. In parallel, may regulate actin cytoskeleton reorganization directly through interaction with F-actin or indirectly through actinins and filamins. Most probably involved in the processes of epithelial cell differentiation, cell spreading and neurite outgrowth. Undergoes liquid-liquid phase separation to form tubular recycling endosomes. Plays 2 sequential roles in the biogenesis of tubular recycling endosomes: first organizes phase separation and then the closed form formed by interaction with RAB8A promotes endosomal tubulation. This is MICAL-like protein 2 (Micall2) from Rattus norvegicus (Rat).